Reading from the N-terminus, the 1877-residue chain is Phosphatidylinositol 4-kinase stt4 (1877 aa).

The PIK helical domain occupies 1305 to 1491; it reads PDSDAASSPI…KPILDRVMDK (187 aa). The segment at 1492–1625 is pleckstrin homology (PH) domain conferring phosphoinositide binding specificity; it reads MINSLSGEDK…EVWQSAIFKV (134 aa). The region spanning 1593-1861 is the PI3K/PI4K catalytic domain; the sequence is DPEELAVNGT…LIEQSYANKR (269 aa). The G-loop stretch occupies residues 1599–1605; it reads VNGTEEE. The interval 1728–1736 is catalytic loop; that stretch reads QFKDRHNGN. The activation loop stretch occupies residues 1747-1771; that stretch reads HIDFGFIFDIAPGGITFESAPFKLT.

The protein belongs to the PI3/PI4-kinase family. Type III PI4K subfamily.

It localises to the cytoplasm. It catalyses the reaction a 1,2-diacyl-sn-glycero-3-phospho-(1D-myo-inositol) + ATP = a 1,2-diacyl-sn-glycero-3-phospho-(1D-myo-inositol 4-phosphate) + ADP + H(+). In terms of biological role, acts on phosphatidylinositol (PI) in the first committed step in the production of the second messenger inositol 1,4,5,-trisphosphate. The chain is Phosphatidylinositol 4-kinase stt4 (stt4) from Schizosaccharomyces pombe (strain 972 / ATCC 24843) (Fission yeast).